The sequence spans 112 residues: Small ribosomal subunit protein uS17 (112 aa).

Belongs to the universal ribosomal protein uS17 family. Part of the 30S ribosomal subunit.

Its function is as follows. One of the primary rRNA binding proteins, it binds specifically to the 5'-end of 16S ribosomal RNA. This chain is Small ribosomal subunit protein uS17, found in Thermotoga neapolitana (strain ATCC 49049 / DSM 4359 / NBRC 107923 / NS-E).